The chain runs to 439 residues: Probable glycine dehydrogenase (decarboxylating) subunit 1 (439 aa).

It belongs to the GcvP family. N-terminal subunit subfamily. As to quaternary structure, the glycine cleavage system is composed of four proteins: P, T, L and H. In this organism, the P 'protein' is a heterodimer of two subunits.

The catalysed reaction is N(6)-[(R)-lipoyl]-L-lysyl-[glycine-cleavage complex H protein] + glycine + H(+) = N(6)-[(R)-S(8)-aminomethyldihydrolipoyl]-L-lysyl-[glycine-cleavage complex H protein] + CO2. Its function is as follows. The glycine cleavage system catalyzes the degradation of glycine. The P protein binds the alpha-amino group of glycine through its pyridoxal phosphate cofactor; CO(2) is released and the remaining methylamine moiety is then transferred to the lipoamide cofactor of the H protein. The chain is Probable glycine dehydrogenase (decarboxylating) subunit 1 from Aquifex aeolicus (strain VF5).